The following is a 323-amino-acid chain: MSNYDALYSQLVAMGQERWAEQLQATLPDKLALESTAKMAGWQSAMQSLPEIRPSRIELKENVTIGTSDDLGDINREELIALLQAFHPWRKGPYNFFGIEIDTEWRSDWKWERLLPHIQPLAGRRVLDVGCGNGYHGWRMRGAGADFVLGIDPFLLSVQQFQVMQRYLRDPQHHVIPIGIEEVPPNLACFDSVFSMGVLYHRRSPLDHLFELKGCLRPGGELILETLIVEGKRETIFMPPGRYAKMRNVWFIPSIEAMTLWLERCGFTDIGCVDTNRTSREEQRSTGWMRFESLADFLDPNDAEKTIEGHPAPLRAIFTATKL.

Carboxy-S-adenosyl-L-methionine contacts are provided by residues lysine 91, tryptophan 105, lysine 110, glycine 130, 180-181, methionine 196, tyrosine 200, and arginine 315; that span reads IE.

This sequence belongs to the class I-like SAM-binding methyltransferase superfamily. CmoB family. As to quaternary structure, homotetramer.

It catalyses the reaction carboxy-S-adenosyl-L-methionine + 5-hydroxyuridine(34) in tRNA = 5-carboxymethoxyuridine(34) in tRNA + S-adenosyl-L-homocysteine + H(+). Functionally, catalyzes carboxymethyl transfer from carboxy-S-adenosyl-L-methionine (Cx-SAM) to 5-hydroxyuridine (ho5U) to form 5-carboxymethoxyuridine (cmo5U) at position 34 in tRNAs. The polypeptide is tRNA U34 carboxymethyltransferase (Geobacter sp. (strain M21)).